We begin with the raw amino-acid sequence, 1131 residues long: Protein DWARF 53 (1131 aa).

The Clp R domain maps to 8–181 (ARQCLSPAAV…KLAILRPAPP (174 aa)). 2 repeat regions span residues 12-85 (LSPA…LDRL) and 103-181 (VSNS…PAPP). Residues 511–574 (NRDPYKPFPR…ISSPSVTNKR (64 aa)) are disordered. The span at 558–569 (SSSTARPISSPS) shows a compositional bias: low complexity. The EAR 1 motif lies at 578-582 (LVLNL). The tract at residues 588–655 (KSDENLQERG…KRVEDSERSV (68 aa)) is disordered. Residues 597-609 (GMQSQHGTLSNVD) show a composition bias toward polar residues. Residues 646 to 655 (KRVEDSERSV) show a composition bias toward basic and acidic residues. The EAR 2 signature appears at 799–803 (LDLNL). Disordered stretches follow at residues 951 to 970 (ISDDQEKLQESPSSSKRLHR) and 976 to 1002 (FDLNLPVDEDEPLDADDDSSSHENSYG). The EAR 3 signature appears at 976 to 981 (FDLNLP). Residues 982–993 (VDEDEPLDADDD) are compositionally biased toward acidic residues.

Belongs to the ClpA/ClpB family. Interacts with D3. Interacts with D14. The interaction with D14 is enhanced in the presence of strigolactones. The interaction with D14 occurs in the presence of (2'R) stereoisomers of strigolactones, but not (2'S) stereoisomers. Interacts with the TOPLESS-related proteins TPR1, TPR2 and TPR3. Interacts with SPL14/IPA1. Polyubiquitinated. Strigolactone, but not karrikin, triggers rapid SCF(D3)-dependent degradation via the proteasome. As to expression, expressed in the shoot bases of seedlings, young leaves, axillary buds and young panicles. Expressed in young roots vasculature, culms, internodes and nodes, preferentially in the parenchyma cells surrounding the xylem.

It localises to the nucleus. Its function is as follows. Repressor of strigolactones (SL) signaling. Subjected to a negative feedback control of SL signaling. Suppresses the transcriptional activation activity of SPL14/IPA1 in SL signaling. Acts with SPL14/IPA1 to mediate the SL-regulated tiller development. Subject to a negative feedback regulation by SPL14/IPA1, which binds to D53 promoter to repress D53 gene expression. In Oryza sativa subsp. japonica (Rice), this protein is Protein DWARF 53.